A 133-amino-acid polypeptide reads, in one-letter code: Phosphoribosyl-AMP cyclohydrolase (133 aa).

Aspartate 77 is a Mg(2+) binding site. Cysteine 78 provides a ligand contact to Zn(2+). Residues aspartate 79 and aspartate 81 each contribute to the Mg(2+) site. Residues cysteine 95 and cysteine 102 each contribute to the Zn(2+) site.

This sequence belongs to the PRA-CH family. As to quaternary structure, homodimer. Mg(2+) is required as a cofactor. The cofactor is Zn(2+).

Its subcellular location is the cytoplasm. It catalyses the reaction 1-(5-phospho-beta-D-ribosyl)-5'-AMP + H2O = 1-(5-phospho-beta-D-ribosyl)-5-[(5-phospho-beta-D-ribosylamino)methylideneamino]imidazole-4-carboxamide. It participates in amino-acid biosynthesis; L-histidine biosynthesis; L-histidine from 5-phospho-alpha-D-ribose 1-diphosphate: step 3/9. Catalyzes the hydrolysis of the adenine ring of phosphoribosyl-AMP. The sequence is that of Phosphoribosyl-AMP cyclohydrolase from Azotobacter chroococcum mcd 1.